We begin with the raw amino-acid sequence, 166 residues long: Endoribonuclease YbeY (166 aa).

Zn(2+) is bound by residues histidine 125, histidine 129, and histidine 135.

Belongs to the endoribonuclease YbeY family. Zn(2+) is required as a cofactor.

The protein localises to the cytoplasm. Single strand-specific metallo-endoribonuclease involved in late-stage 70S ribosome quality control and in maturation of the 3' terminus of the 16S rRNA. This is Endoribonuclease YbeY from Alkalilimnicola ehrlichii (strain ATCC BAA-1101 / DSM 17681 / MLHE-1).